Here is a 150-residue protein sequence, read N- to C-terminus: Large ribosomal subunit protein bL9 (150 aa).

This sequence belongs to the bacterial ribosomal protein bL9 family.

Binds to the 23S rRNA. The sequence is that of Large ribosomal subunit protein bL9 from Pseudarthrobacter chlorophenolicus (strain ATCC 700700 / DSM 12829 / CIP 107037 / JCM 12360 / KCTC 9906 / NCIMB 13794 / A6) (Arthrobacter chlorophenolicus).